Here is a 150-residue protein sequence, read N- to C-terminus: Endoribonuclease YbeY (150 aa).

Zn(2+) is bound by residues His-113, His-117, and His-123.

The protein belongs to the endoribonuclease YbeY family. Zn(2+) is required as a cofactor.

It localises to the cytoplasm. Single strand-specific metallo-endoribonuclease involved in late-stage 70S ribosome quality control and in maturation of the 3' terminus of the 16S rRNA. The chain is Endoribonuclease YbeY from Malacoplasma penetrans (strain HF-2) (Mycoplasma penetrans).